The following is a 104-amino-acid chain: uncharacterized protein (104 aa).

The chain crosses the membrane as a helical span at residues 77-98 (IAAVRANIIICACFFYLFCYCS).

The protein localises to the membrane. This is an uncharacterized protein from Saccharomyces cerevisiae (strain ATCC 204508 / S288c) (Baker's yeast).